Here is a 309-residue protein sequence, read N- to C-terminus: Peptide methionine sulfoxide reductase MsrA/MsrB (309 aa).

The tract at residues 1 to 153 (MIYLAGGCFW…PNGYCHIDIN (153 aa)) is peptide methionine sulfoxide reductase A. Residue Cys-8 is part of the active site. Residues 170 to 293 (ATEIKEKLSA…NSLSITFIPK (124 aa)) enclose the MsrB domain. Cys-282 acts as the Nucleophile in catalysis.

The protein in the N-terminal section; belongs to the MsrA Met sulfoxide reductase family. It in the C-terminal section; belongs to the MsrB Met sulfoxide reductase family.

The enzyme catalyses L-methionyl-[protein] + [thioredoxin]-disulfide + H2O = L-methionyl-(S)-S-oxide-[protein] + [thioredoxin]-dithiol. It carries out the reaction [thioredoxin]-disulfide + L-methionine + H2O = L-methionine (S)-S-oxide + [thioredoxin]-dithiol. It catalyses the reaction L-methionyl-[protein] + [thioredoxin]-disulfide + H2O = L-methionyl-(R)-S-oxide-[protein] + [thioredoxin]-dithiol. Its function is as follows. Has an important function as a repair enzyme for proteins that have been inactivated by oxidation. Catalyzes the reversible oxidation-reduction of methionine sulfoxide in proteins to methionine. The sequence is that of Peptide methionine sulfoxide reductase MsrA/MsrB (msrAB) from Streptococcus pyogenes serotype M18 (strain MGAS8232).